The sequence spans 73 residues: DNA-directed RNA polymerase subunit omega (73 aa).

It belongs to the RNA polymerase subunit omega family. The RNAP catalytic core consists of 2 alpha, 1 beta, 1 beta' and 1 omega subunit. When a sigma factor is associated with the core the holoenzyme is formed, which can initiate transcription.

It carries out the reaction RNA(n) + a ribonucleoside 5'-triphosphate = RNA(n+1) + diphosphate. Its function is as follows. Promotes RNA polymerase assembly. Latches the N- and C-terminal regions of the beta' subunit thereby facilitating its interaction with the beta and alpha subunits. In Oleidesulfovibrio alaskensis (strain ATCC BAA-1058 / DSM 17464 / G20) (Desulfovibrio alaskensis), this protein is DNA-directed RNA polymerase subunit omega.